Consider the following 331-residue polypeptide: Probable transcriptional regulatory protein At2g25830 (331 aa).

The protein belongs to the TACO1 family.

In Arabidopsis thaliana (Mouse-ear cress), this protein is Probable transcriptional regulatory protein At2g25830.